Consider the following 224-residue polypeptide: UPF0758 protein AHA_0160 (224 aa).

The 123-residue stretch at 102–224 folds into the MPN domain; it reads PLTSPQLTRD…TVSFAERGWL (123 aa). His-173, His-175, and Asp-186 together coordinate Zn(2+). Residues 173 to 186 carry the JAMM motif motif; the sequence is HNHPSGVAEPSRAD.

This sequence belongs to the UPF0758 family.

This is UPF0758 protein AHA_0160 from Aeromonas hydrophila subsp. hydrophila (strain ATCC 7966 / DSM 30187 / BCRC 13018 / CCUG 14551 / JCM 1027 / KCTC 2358 / NCIMB 9240 / NCTC 8049).